Consider the following 327-residue polypeptide: MASMAAAIAASRSAVMSGNRPLDDRERKRFTYFSSLSPMARKIMQDKEKIREKYGPEWARLPPAQQDEIIDRCLVGPRAPAPRDPGDSEELTRFPGLRGPTGQKVVRFGDEDLTWQDEHSAPFSWETKSQMEFSISALSIQEPSNGTAASEPRPLSKASQGSQALKSSQGSRSSSLDALGPTRKEEEASFWKINAERSRGEGPEAEFQSLTPSQIKSMEKGEKVLPPCYRQEPAPKDREAKVERPSTLRQEQRPLPNVSTERERPQPVQAFSSALHEAAPSQLEGKLPSPDVRQDDGEDTLFSEPKFAQVSSSNVVLKTGFDFLDNW.

A compositionally biased stretch (low complexity) spans 1–17; it reads MASMAAAIAASRSAVMS. The disordered stretch occupies residues 1 to 22; it reads MASMAAAIAASRSAVMSGNRPL. Residue Ala-2 is modified to N-acetylalanine. Ser-37 carries the post-translational modification Phosphoserine. The tract at residues 76-113 is disordered; that stretch reads GPRAPAPRDPGDSEELTRFPGLRGPTGQKVVRFGDEDL. Ser-129 is modified (phosphoserine). Polar residues predominate over residues 134–148; it reads SISALSIQEPSNGTA. The segment at 134–299 is disordered; it reads SISALSIQEP…PDVRQDDGED (166 aa). Residues 162 to 176 show a composition bias toward low complexity; that stretch reads SQALKSSQGSRSSSL. Position 175 is a phosphoserine (Ser-175). Composition is skewed to basic and acidic residues over residues 182 to 202 and 233 to 252; these read TRKE…RGEG and PAPK…RQEQ. Ser-289 bears the Phosphoserine mark.

The protein resides in the cytoplasm. This is an uncharacterized protein from Homo sapiens (Human).